The chain runs to 216 residues: Ribosome maturation factor RimP (216 aa).

The protein belongs to the RimP family.

The protein resides in the cytoplasm. In terms of biological role, required for maturation of 30S ribosomal subunits. The protein is Ribosome maturation factor RimP of Bartonella quintana (strain Toulouse) (Rochalimaea quintana).